Here is a 512-residue protein sequence, read N- to C-terminus: Putative ankyrin repeat protein FPV233 (512 aa).

8 ANK repeats span residues 45–73 (IPFI…NVNQ), 77–106 (DDTY…QCSV), 136–168 (IQDI…DINM), 172–201 (HGNS…NPNI), 205–236 (TNKS…NTDP), 238–262 (LSHA…SINA), 266–296 (YGNT…DVNA), and 301–329 (RNLT…DINS).

This Vertebrata (FPV) protein is Putative ankyrin repeat protein FPV233.